A 101-amino-acid polypeptide reads, in one-letter code: Pore-forming peptide amoebapore C (101 aa).

Residues 1 to 24 (MKLFVLLCVFVLCLASQEKQQDRE) form the signal peptide. The 77-residue stretch at 25–101 (IPVLCPVCTS…KLICGLIHAC (77 aa)) folds into the Saposin B-type domain. Disulfide bonds link Cys-29-Cys-101, Cys-32-Cys-95, and Cys-59-Cys-70.

As to quaternary structure, monomer. Homodimer. Hexamer; formed during insertion in the membrane.

Its subcellular location is the cytoplasmic granule. In terms of biological role, forms pores in the cell membrane of host cells. Has antibacterial activity against M.luteus, no activity against E.coli. Implicated in the cytolytic activity of the parasite. The chain is Pore-forming peptide amoebapore C from Entamoeba histolytica (strain ATCC 30459 / HM-1:IMSS / ABRM).